A 149-amino-acid chain; its full sequence is Calmodulin-6 (149 aa).

4 EF-hand domains span residues 8-43 (DQIS…LGQN), 44-79 (PTEA…KMKD), 81-116 (DSEE…LGEK), and 117-149 (LSDE…MMAK). Ca(2+) is bound by residues aspartate 21, aspartate 23, aspartate 25, cysteine 27, glutamate 32, aspartate 57, aspartate 59, asparagine 61, threonine 63, glutamate 68, aspartate 94, aspartate 96, asparagine 98, glutamate 105, aspartate 130, aspartate 132, aspartate 134, glutamine 136, and glutamate 141.

This sequence belongs to the calmodulin family. As to quaternary structure, interacts with KCBP.

In terms of biological role, calmodulin mediates the control of a large number of enzymes, ion channels and other proteins by Ca(2+). Among the enzymes to be stimulated by the calmodulin-Ca(2+) complex are a number of protein kinases and phosphatases. This chain is Calmodulin-6 (CAM6), found in Arabidopsis thaliana (Mouse-ear cress).